Reading from the N-terminus, the 909-residue chain is Probable DNA-directed RNA polymerase subunit beta (909 aa).

It belongs to the RNA polymerase beta chain family.

It carries out the reaction RNA(n) + a ribonucleoside 5'-triphosphate = RNA(n+1) + diphosphate. Functionally, required for late and very late gene expression. May be a component of the novel RNA polymerase activity induced by baculovirus infection. The chain is Probable DNA-directed RNA polymerase subunit beta (LEF-8) from Lepidoptera (butterflies and moths).